The chain runs to 64 residues: Alpha-conotoxin-like Ac1.1b (64 aa).

Positions 1 to 21 (MGMRMMFTLFLLVVLTTTVVS) are cleaved as a signal peptide. The propeptide occupies 22–47 (FPSDSASDGRDDEAKDERSDMYKSKR). Residues 23 to 46 (PSDSASDGRDDEAKDERSDMYKSK) are disordered. Over residues 28-44 (SDGRDDEAKDERSDMYK) the composition is skewed to basic and acidic residues. Cystine bridges form between C51-C56 and C52-C62. Position 62 is a cysteine amide (C62).

It belongs to the conotoxin A superfamily. Expressed by the venom duct.

The protein resides in the secreted. Functionally, alpha-conotoxins act on postsynaptic membranes, they bind to the nicotinic acetylcholine receptors (nAChR) and thus inhibit them. The polypeptide is Alpha-conotoxin-like Ac1.1b (Conus achatinus (Little frog cone)).